Reading from the N-terminus, the 276-residue chain is ADP-dependent (S)-NAD(P)H-hydrate dehydratase (276 aa).

The YjeF C-terminal domain occupies 7-274 (METLNSINIP…NEIPYAMKQL (268 aa)). 3 residues coordinate (6S)-NADPHX: alanine 42, glycine 105, and histidine 154. Glycine 216 is a binding site for AMP. Aspartate 217 provides a ligand contact to (6S)-NADPHX.

The protein belongs to the NnrD/CARKD family. Homotetramer. Mg(2+) serves as cofactor.

It catalyses the reaction (6S)-NADHX + ADP = AMP + phosphate + NADH + H(+). The catalysed reaction is (6S)-NADPHX + ADP = AMP + phosphate + NADPH + H(+). Catalyzes the dehydration of the S-form of NAD(P)HX at the expense of ADP, which is converted to AMP. Together with NAD(P)HX epimerase, which catalyzes the epimerization of the S- and R-forms, the enzyme allows the repair of both epimers of NAD(P)HX, a damaged form of NAD(P)H that is a result of enzymatic or heat-dependent hydration. This chain is ADP-dependent (S)-NAD(P)H-hydrate dehydratase, found in Staphylococcus aureus (strain NCTC 8325 / PS 47).